The primary structure comprises 926 residues: Protein translocase subunit SecA (926 aa).

Residues Q87, 105–109 (GEGKT), and D512 contribute to the ATP site. C911, C913, C922, and H923 together coordinate Zn(2+).

This sequence belongs to the SecA family. As to quaternary structure, monomer and homodimer. Part of the essential Sec protein translocation apparatus which comprises SecA, SecYEG and auxiliary proteins SecDF-YajC and YidC. Zn(2+) is required as a cofactor.

Its subcellular location is the cell inner membrane. It localises to the cytoplasm. It catalyses the reaction ATP + H2O + cellular proteinSide 1 = ADP + phosphate + cellular proteinSide 2.. Its function is as follows. Part of the Sec protein translocase complex. Interacts with the SecYEG preprotein conducting channel. Has a central role in coupling the hydrolysis of ATP to the transfer of proteins into and across the cell membrane, serving both as a receptor for the preprotein-SecB complex and as an ATP-driven molecular motor driving the stepwise translocation of polypeptide chains across the membrane. The sequence is that of Protein translocase subunit SecA from Psychrobacter cryohalolentis (strain ATCC BAA-1226 / DSM 17306 / VKM B-2378 / K5).